The primary structure comprises 527 residues: MLGNHAEVDIRRTFAIISHPDAGKTTITEKVLLFGQAIQVAGTVKGRGSKQHAKSDWMEMEKDRGISITTSVMQFPYKDCLVNLLDTPGHEDFSEDTYRTLTAVDSCLMVIDAAKGVEDRTRKLMEVTRLRDTPIITFMNKCDRDIRDPMEVMDEVENELKIACAPITWPIGCGKSFKGVYHLHRDETILYQSGLGHMMQEVRIVKGLDNPELDKAIGSELAEQLREELELVIGASHEFELAAFLKGELTPVYFGTALGNFGVDHMLDGLTQWAPKPQPRQTEVREVTSLDSDFSGFIFKIQANMDPKHRDRVAFMRVVSGKYEKGMKMHHVRVGKDVRISDALTFVAGDREQVEEAYPGDIIGLHNHGTIQIGDTFTQGEKLKFTGIPNFAPEMFRRIRLKDPLKQKQLLKGLVQLAEEGAVQVFRPLDNNDLIVGAVGVLQFEVVVGRLKSEYNVEAIYEAINVSTARWVYCKDERKLEEFRRKCSVNLALDGGNNLTYIAPTMVNLNLSMERYPDVAFAKTREN.

Residues 9–278 enclose the tr-type G domain; sequence DIRRTFAIIS…GLTQWAPKPQ (270 aa). GTP contacts are provided by residues 18–25, 86–90, and 140–143; these read SHPDAGKT, DTPGH, and NKCD.

Belongs to the TRAFAC class translation factor GTPase superfamily. Classic translation factor GTPase family. PrfC subfamily.

Its subcellular location is the cytoplasm. Increases the formation of ribosomal termination complexes and stimulates activities of RF-1 and RF-2. It binds guanine nucleotides and has strong preference for UGA stop codons. It may interact directly with the ribosome. The stimulation of RF-1 and RF-2 is significantly reduced by GTP and GDP, but not by GMP. In Shewanella denitrificans (strain OS217 / ATCC BAA-1090 / DSM 15013), this protein is Peptide chain release factor 3.